The primary structure comprises 103 residues: Nucleoid-associated protein Cgl0243/cg0297 (103 aa).

Belongs to the YbaB/EbfC family. Homodimer.

Its subcellular location is the cytoplasm. The protein localises to the nucleoid. In terms of biological role, binds to DNA and alters its conformation. May be involved in regulation of gene expression, nucleoid organization and DNA protection. The protein is Nucleoid-associated protein Cgl0243/cg0297 of Corynebacterium glutamicum (strain ATCC 13032 / DSM 20300 / JCM 1318 / BCRC 11384 / CCUG 27702 / LMG 3730 / NBRC 12168 / NCIMB 10025 / NRRL B-2784 / 534).